A 247-amino-acid polypeptide reads, in one-letter code: PF03932 family protein CutC (247 aa).

It belongs to the CutC family.

The protein localises to the cytoplasm. The sequence is that of PF03932 family protein CutC from Chromobacterium violaceum (strain ATCC 12472 / DSM 30191 / JCM 1249 / CCUG 213 / NBRC 12614 / NCIMB 9131 / NCTC 9757 / MK).